Consider the following 152-residue polypeptide: Large ribosomal subunit protein bL9 (152 aa).

Belongs to the bacterial ribosomal protein bL9 family.

Binds to the 23S rRNA. This Saccharophagus degradans (strain 2-40 / ATCC 43961 / DSM 17024) protein is Large ribosomal subunit protein bL9.